Consider the following 80-residue polypeptide: Lantibiotic Flvalpha.b (80 aa).

Positions 1–38 are cleaved as a propeptide — cleaved by FlvT; the sequence is MNKNPIYRSEEEAKNIACGNVAAELDENSQALDAINGA. A 2,3-didehydrobutyrine; by FlvM1 mark is found at T43 and T47. Positions 52–55 form a cross-link, beta-methyllanthionine (Thr-Cys); by FlvM1; the sequence is TVGC. The segment at residues 58–68 is a cross-link (lanthionine (Ser-Cys); by FlvM1); it reads SYGLGNGGYCC. 2 consecutive cross-links (beta-methyllanthionine (Thr-Cys); by FlvM1) follow at residues 69–74 and 71–78; these read TYTVEC and TVECSKTC.

The lanthionine formed by Ser-58 and Cys-68 forms a putative lipid II binding motif. In terms of processing, maturation of FlvA1 peptides involves the enzymatic conversion of Thr, and Ser into dehydrated AA and the formation of thioether bonds with cysteines. Modifications are processed by the flavecin synthetase FlvM1. This is followed by membrane translocation and cleavage of the modified precursor. Post-translationally, contains DL-lanthionine and DL-beta-methyllanthionine, when coepressed in E.coli with the flavecin synthetase FlvM1.

Its subcellular location is the secreted. Functionally, lanthionine-containing peptide antibiotic (lantibiotic) only active on Gram-positive bacteria in synergy with Flvbeta peptides, which are encoded by the same operon than Flvalpha.a. Shows antibacterial activity in synergy with Flvbeta.b, Flvbeta.c, Flvbeta.e and Flvbeta.g. Does not show antibacterial activity when tested with Flvbeta.a, Flvbeta.d, Flvbeta.f and Flvbeta.h. The bactericidal activity of lantibiotics is based on depolarization of energized bacterial cytoplasmic membranes, initiated by the formation of aqueous transmembrane pores. This chain is Lantibiotic Flvalpha.b, found in Ruminococcus flavefaciens.